The following is a 495-amino-acid chain: AAA-ATPase At2g18193 (495 aa).

A helical membrane pass occupies residues 7–28 (FSFSPSSLFSAYASLTGFLMLF). Residue 250–257 (GPPGTGKS) coordinates ATP. A disordered region spans residues 451–495 (EVSICKATDDDEKQNGSLGCVKKKKKGGKQKGKGKGKGKAKTYLI). Positions 471–495 (VKKKKKGGKQKGKGKGKGKAKTYLI) are enriched in basic residues.

Belongs to the AAA ATPase family. BCS1 subfamily. Mg(2+) serves as cofactor.

It localises to the membrane. It carries out the reaction ATP + H2O = ADP + phosphate + H(+). This chain is AAA-ATPase At2g18193, found in Arabidopsis thaliana (Mouse-ear cress).